A 216-amino-acid chain; its full sequence is MKLSTADSIFFFLPYEFINPIILLIPMATIIFAGRSNVGKSTLIYRLTGKKVRRGKRPGVTRKIIEIEWKNHKIIDMPGFGFMMGLPKEVQERIKDEIVHFIEDNAKNIDVAVLVVDGKAAPEIIKRWEKRGEIPIDVEFYQFLRELDIPTIVAVNKLDKIKNVQEVINFLAEKFEVPLSEIDKVFIPISAKFGDNIERLKNRIFEVIRERQGRRV.

The EngB-type G domain occupies 26–210 (PMATIIFAGR…KNRIFEVIRE (185 aa)). GTP contacts are provided by residues 34–41 (GRSNVGKS), 59–63 (GVTRK), 76–79 (DMPG), 156–159 (NKLD), and 189–191 (ISA). Mg(2+) is bound by residues serine 41 and threonine 61.

It belongs to the TRAFAC class TrmE-Era-EngA-EngB-Septin-like GTPase superfamily. EngB GTPase family. Requires Mg(2+) as cofactor.

Functionally, necessary for normal cell division and for the maintenance of normal septation. The sequence is that of Probable GTP-binding protein EngB from Pyrococcus horikoshii (strain ATCC 700860 / DSM 12428 / JCM 9974 / NBRC 100139 / OT-3).